We begin with the raw amino-acid sequence, 108 residues long: Thioredoxin (108 aa).

The Thioredoxin domain maps to 2-108 (GKYFEATDKN…IAKKIDEHIG (107 aa)). A disulfide bond links Cys32 and Cys35.

Belongs to the thioredoxin family.

Functionally, participates in various redox reactions through the reversible oxidation of its active center dithiol to a disulfide and catalyzes dithiol-disulfide exchange reactions. This chain is Thioredoxin (trxA), found in Chlorobaculum thiosulfatiphilum (Chlorobium limicola f.sp. thiosulfatophilum).